We begin with the raw amino-acid sequence, 377 residues long: Anhydro-N-acetylmuramic acid kinase (377 aa).

Glycine 14 to aspartate 21 serves as a coordination point for ATP.

It belongs to the anhydro-N-acetylmuramic acid kinase family.

It carries out the reaction 1,6-anhydro-N-acetyl-beta-muramate + ATP + H2O = N-acetyl-D-muramate 6-phosphate + ADP + H(+). The protein operates within amino-sugar metabolism; 1,6-anhydro-N-acetylmuramate degradation. Its pathway is cell wall biogenesis; peptidoglycan recycling. Its function is as follows. Catalyzes the specific phosphorylation of 1,6-anhydro-N-acetylmuramic acid (anhMurNAc) with the simultaneous cleavage of the 1,6-anhydro ring, generating MurNAc-6-P. Is required for the utilization of anhMurNAc either imported from the medium or derived from its own cell wall murein, and thus plays a role in cell wall recycling. The polypeptide is Anhydro-N-acetylmuramic acid kinase (Pasteurella multocida (strain Pm70)).